The following is a 62-amino-acid chain: Alpha-conotoxin ViIA (62 aa).

The signal sequence occupies residues 1 to 18 (MGMRMMFVVFLLVVFASS). A propeptide spanning residues 19–45 (VTLDRASYGRYASPVDRASALIAQAIL) is cleaved from the precursor. 2 cysteine pairs are disulfide-bonded: cysteine 48-cysteine 54 and cysteine 49-cysteine 61.

The protein belongs to the conotoxin A superfamily. Post-translationally, the toxin is inactive on the alpha-3-beta-2 nAChR when the disulfide bond connectivity is C1-C4 and C2-C3 (ViIA-I) (IC(50)&gt;10000 nM). As to expression, expressed by the venom duct.

Its subcellular location is the secreted. Functionally, alpha-conotoxins act on postsynaptic membranes, they bind to the nicotinic acetylcholine receptors (nAChR) and thus inhibit them. This toxin selectively inhibits nicotinic acetylcholine receptor (nAChR) alpha-3-beta-2 subtype (IC(50)=845.5 nM). The chain is Alpha-conotoxin ViIA from Conus virgo (Virgin cone).